We begin with the raw amino-acid sequence, 244 residues long: tRNA pseudouridine synthase A (244 aa).

Residue D52 is the Nucleophile of the active site. Residue Y110 participates in substrate binding.

The protein belongs to the tRNA pseudouridine synthase TruA family. As to quaternary structure, homodimer.

It carries out the reaction uridine(38/39/40) in tRNA = pseudouridine(38/39/40) in tRNA. Its function is as follows. Formation of pseudouridine at positions 38, 39 and 40 in the anticodon stem and loop of transfer RNAs. The protein is tRNA pseudouridine synthase A of Clostridium kluyveri (strain ATCC 8527 / DSM 555 / NBRC 12016 / NCIMB 10680 / K1).